The primary structure comprises 772 residues: Cellulosomal-scaffolding protein B (772 aa).

In terms of domain architecture, Cohesin 1 spans 1-80; it reads DPSKSFDSAI…TTFVAGGVNL (80 aa). The linker (Pro/Thr-rich) stretch occupies residues 81 to 93; the sequence is GSSVPTTQPNVPS. In terms of domain architecture, Cohesin 2 spans 94-240; that stretch reads DGVVVEIGKV…VNVGNATPTK (147 aa). The span at 235–276 shows a compositional bias: low complexity; the sequence is NATPTKGATPTNTATPTKSATATPPGHSVPTNTPTNTPANTP. Disordered stretches follow at residues 235 to 277 and 438 to 464; these read NATP…NTPV and VVPSTQPVTTPPATTKPPATTIPPSDD. The tract at residues 241–272 is linker (Pro/Thr-rich); it reads GATPTNTATPTKSATATPPGHSVPTNTPTNTP. One can recognise a CBM3 domain in the interval 277-435; it reads VSGNLKVEFY…GVLVWGKEPG (159 aa). The span at 438–461 shows a compositional bias: low complexity; it reads VVPSTQPVTTPPATTKPPATTIPP. Residues 440 to 461 form a linker (Pro/Thr-rich) region; the sequence is PSTQPVTTPPATTKPPATTIPP. The Cohesin 3 domain maps to 462–607; sequence SDDPNAIKIK…ETDLINGGVL (146 aa). The region spanning 704–771 is the Dockerin domain; sequence IMMWVGDIVK…FGATSSDYDA (68 aa).

Post-translationally, O-glycosylated on most but not all Thr residues of the linker units.

It localises to the secreted. Acts as a scaffolding protein in the cellulosome. It promotes binding of cellulose to the catalytic domains of the cellulolytic enzymes probably through the binding of the nine repeated domains with dockerin domains present in catalytic subunits of the cellulosome. This Acetivibrio thermocellus (Hungateiclostridium thermocellum) protein is Cellulosomal-scaffolding protein B (cipB).